We begin with the raw amino-acid sequence, 213 residues long: Kynurenine formamidase (213 aa).

A substrate-binding site is contributed by tryptophan 18. Zn(2+) is bound by residues histidine 48, histidine 52, and aspartate 54. Histidine 58 functions as the Proton donor/acceptor in the catalytic mechanism. 2 residues coordinate Zn(2+): histidine 160 and glutamate 172.

It belongs to the Cyclase 1 superfamily. KynB family. As to quaternary structure, homodimer. Requires Zn(2+) as cofactor.

It carries out the reaction N-formyl-L-kynurenine + H2O = L-kynurenine + formate + H(+). It participates in amino-acid degradation; L-tryptophan degradation via kynurenine pathway; L-kynurenine from L-tryptophan: step 2/2. In terms of biological role, catalyzes the hydrolysis of N-formyl-L-kynurenine to L-kynurenine, the second step in the kynurenine pathway of tryptophan degradation. In Burkholderia ambifaria (strain ATCC BAA-244 / DSM 16087 / CCUG 44356 / LMG 19182 / AMMD) (Burkholderia cepacia (strain AMMD)), this protein is Kynurenine formamidase.